The chain runs to 287 residues: Pyridoxal kinase PdxY (287 aa).

Residues S9 and 44 to 45 (MQ) each bind substrate. Positions 111, 142, 147, and 180 each coordinate ATP. Position 221 (D221) interacts with substrate.

It belongs to the pyridoxine kinase family. PdxY subfamily. As to quaternary structure, homodimer. The cofactor is Mg(2+).

It carries out the reaction pyridoxal + ATP = pyridoxal 5'-phosphate + ADP + H(+). It functions in the pathway cofactor metabolism; pyridoxal 5'-phosphate salvage; pyridoxal 5'-phosphate from pyridoxal: step 1/1. In terms of biological role, pyridoxal kinase involved in the salvage pathway of pyridoxal 5'-phosphate (PLP). Catalyzes the phosphorylation of pyridoxal to PLP. The sequence is that of Pyridoxal kinase PdxY from Burkholderia pseudomallei (strain K96243).